A 303-amino-acid chain; its full sequence is Probable 5-dehydro-4-deoxyglucarate dehydratase (303 aa).

The protein belongs to the DapA family.

It carries out the reaction 5-dehydro-4-deoxy-D-glucarate + H(+) = 2,5-dioxopentanoate + CO2 + H2O. It participates in carbohydrate acid metabolism; D-glucarate degradation; 2,5-dioxopentanoate from D-glucarate: step 2/2. The chain is Probable 5-dehydro-4-deoxyglucarate dehydratase from Pseudomonas syringae pv. tomato (strain ATCC BAA-871 / DC3000).